The sequence spans 294 residues: 33 kDa chaperonin (294 aa).

Disulfide bonds link C238-C240 and C271-C274.

This sequence belongs to the HSP33 family. Under oxidizing conditions two disulfide bonds are formed involving the reactive cysteines. Under reducing conditions zinc is bound to the reactive cysteines and the protein is inactive.

It localises to the cytoplasm. Functionally, redox regulated molecular chaperone. Protects both thermally unfolding and oxidatively damaged proteins from irreversible aggregation. Plays an important role in the bacterial defense system toward oxidative stress. This is 33 kDa chaperonin from Clostridium novyi (strain NT).